The primary structure comprises 142 residues: MVLTAGDKANVKTVWSKVGSHLEEYGSETLERLFVVYPSTKTYFPHFDLHHDSPQVRAHGKKVLSALGEAVNHIDDIPGALSKLSDLHAQNLRVDPVNFKLLNLCFVVVSGTHHPTILTPEVHVSLDKFLSAVATALTSKYR.

One can recognise a Globin domain in the interval 2–142 (VLTAGDKANV…VATALTSKYR (141 aa)). Histidine 59 is a binding site for O2. Histidine 88 contacts heme b.

The protein belongs to the globin family. As to quaternary structure, tetramer of alpha-1, alpha-2 and two identical beta chains. Red blood cells.

Its function is as follows. Involved in oxygen transport from the lung to the various peripheral tissues. In Aldabrachelys gigantea (Aldabra giant tortoise), this protein is Hemoglobin A subunit alpha-1.